The following is a 323-amino-acid chain: ATP synthase gamma chain (323 aa).

The segment at 215-237 (PAGGPAKEQEQGDEGGHGAPSAA) is disordered. Residues 221–230 (KEQEQGDEGG) show a composition bias toward basic and acidic residues.

This sequence belongs to the ATPase gamma chain family. As to quaternary structure, F-type ATPases have 2 components, CF(1) - the catalytic core - and CF(0) - the membrane proton channel. CF(1) has five subunits: alpha(3), beta(3), gamma(1), delta(1), epsilon(1). CF(0) has three main subunits: a, b and c.

It localises to the cell inner membrane. Produces ATP from ADP in the presence of a proton gradient across the membrane. The gamma chain is believed to be important in regulating ATPase activity and the flow of protons through the CF(0) complex. The chain is ATP synthase gamma chain from Sorangium cellulosum (strain So ce56) (Polyangium cellulosum (strain So ce56)).